The sequence spans 331 residues: Peroxidase 49 (331 aa).

Residues 1 to 22 (MARLTSFLLLLSLICFVPLCLC) form the signal peptide. Disulfide bonds link Cys39-Cys119, Cys72-Cys77, Cys125-Cys326, and Cys204-Cys236. Catalysis depends on His70, which acts as the Proton acceptor. 5 residues coordinate Ca(2+): Asp71, Val74, Gly76, Asp78, and Ser80. Pro167 serves as a coordination point for substrate. An N-linked (GlcNAc...) asparagine glycan is attached at Asn170. Heme b is bound at residue His197. Residue Thr198 participates in Ca(2+) binding. The N-linked (GlcNAc...) asparagine glycan is linked to Asn213. Asp249, Ser252, and Asp257 together coordinate Ca(2+).

It belongs to the peroxidase family. Classical plant (class III) peroxidase subfamily. Heme b serves as cofactor. It depends on Ca(2+) as a cofactor.

The protein localises to the secreted. It catalyses the reaction 2 a phenolic donor + H2O2 = 2 a phenolic radical donor + 2 H2O. Removal of H(2)O(2), oxidation of toxic reductants, biosynthesis and degradation of lignin, suberization, auxin catabolism, response to environmental stresses such as wounding, pathogen attack and oxidative stress. These functions might be dependent on each isozyme/isoform in each plant tissue. The polypeptide is Peroxidase 49 (PER49) (Arabidopsis thaliana (Mouse-ear cress)).